Consider the following 188-residue polypeptide: Protein SSX1 (188 aa).

Disordered regions lie at residues 1 to 22 (MNGD…EKRS) and 111 to 188 (IMPK…EDDE). Residues 20–83 (KRSKAFDDIA…KQATDFQGND (64 aa)) form the KRAB-related domain. A compositionally biased stretch (basic and acidic residues) spans 115–125 (KPAEDENDSKG). Ser123 is modified (phosphoserine). The span at 153–170 (KRSGPKRGKHAWTHRLRE) shows a compositional bias: basic residues. Acidic residues predominate over residues 179 to 188 (EISDPEEDDE).

It belongs to the SSX family. As to expression, expressed at high level in the testis. Expressed at low level in thyroid. Not detected in tonsil, colon, lung, spleen, prostate, kidney, striated and smooth muscles. Detected in rhabdomyosarcoma and fibrosarcoma cell lines. Not detected in mesenchymal and epithelial cell lines. Expressed in testis.

The protein resides in the cytoplasm. The protein localises to the cytoskeleton. Its subcellular location is the flagellum axoneme. Functionally, could act as a modulator of transcription. Plays a role in spermatogenesis. In Homo sapiens (Human), this protein is Protein SSX1 (SSX1).